The primary structure comprises 602 residues: Wings apart-like protein homolog 1 (602 aa).

The segment at 34–66 is disordered; the sequence is NKQKRSPGQTVSKRLHKKQRVVSNPDLSLPSSP. Over residues 54–66 the composition is skewed to polar residues; that stretch reads VVSNPDLSLPSSP. The region spanning 160-492 is the WAPL domain; that stretch reads IQMKSIHELR…LGLVEESHEF (333 aa).

It belongs to the WAPL family.

Its subcellular location is the nucleus. The protein localises to the chromosome. Functionally, regulator of sister chromatid cohesion in mitosis which negatively regulates cohesin association with chromatin. The polypeptide is Wings apart-like protein homolog 1 (wpl1) (Schizosaccharomyces pombe (strain 972 / ATCC 24843) (Fission yeast)).